We begin with the raw amino-acid sequence, 198 residues long: Glycerol-3-phosphate acyltransferase 3 (198 aa).

The next 4 helical transmembrane spans lie at 4–24 (TYLLFIVAYLLGSIPFALVVG), 71–91 (LPMVFGLDIHPLWFGLAAVLG), 113–133 (LLCYSPVVFAILAVVFFTLLF), and 147–167 (VVAVIASIVTGDKIFIIAMCL).

This sequence belongs to the PlsY family. In terms of assembly, probably interacts with PlsX.

The protein localises to the cell membrane. It carries out the reaction an acyl phosphate + sn-glycerol 3-phosphate = a 1-acyl-sn-glycero-3-phosphate + phosphate. The protein operates within lipid metabolism; phospholipid metabolism. In terms of biological role, catalyzes the transfer of an acyl group from acyl-phosphate (acyl-PO(4)) to glycerol-3-phosphate (G3P) to form lysophosphatidic acid (LPA). This enzyme utilizes acyl-phosphate as fatty acyl donor, but not acyl-CoA or acyl-ACP. This Bacillus anthracis protein is Glycerol-3-phosphate acyltransferase 3.